Here is a 347-residue protein sequence, read N- to C-terminus: MRIEEDLKLGFKDVLIRPKRSTLKSRSDVELEREFTFKHSGLTWSGVPIIAANMDTVGTFSMAKALATFGILTAVHKHYTAEEWLAFTQGASADVLKHVMVSTGTSDADFEKTQQILSQNPQLNFVCIDVANGYSEHFVQFVAKAREAWPQKTIIAGNVVTGEMCEELILSGADIVKVGIGPGSVCTTRVKTGVGYPQLSAVIECADAAHGLGGQIISDGGCTMPGDVAKAFGGGADFVMLGGMLAGHEESGGTIVEENGEKFMLFYGMSSESAMTRHVGGVAKYRAAEGKTVKLPLRGPVENTARDILGGLRSACTYVGASRLKELTKRTTFIRVQEQENRVFNSL.

108–131 (ADFEKTQQILSQNPQLNFVCIDVA) contacts NADP(+). K(+)-binding residues include G181 and G183. Residue C186 is the Thioimidate intermediate of the active site. 216–239 (IISDGGCTMPGDVAKAFGGGADFV) contacts NADP(+).

It belongs to the IMPDH/GMPR family. GuaC type 1 subfamily. Homotetramer.

The enzyme catalyses IMP + NH4(+) + NADP(+) = GMP + NADPH + 2 H(+). In terms of biological role, catalyzes the irreversible NADPH-dependent deamination of GMP to IMP. It functions in the conversion of nucleobase, nucleoside and nucleotide derivatives of G to A nucleotides, and in maintaining the intracellular balance of A and G nucleotides. In Klebsiella pneumoniae subsp. pneumoniae (strain ATCC 700721 / MGH 78578), this protein is GMP reductase.